The primary structure comprises 162 residues: Protein A49 (162 aa).

This sequence belongs to the poxviridae A49 protein family.

The sequence is that of Protein A49 from Homo sapiens (Human).